The chain runs to 149 residues: Nucleoside diphosphate kinase (149 aa).

ATP is bound by residues K9, F57, R85, T91, R102, and N112. H115 (pros-phosphohistidine intermediate) is an active-site residue.

This sequence belongs to the NDK family. In terms of assembly, homotetramer. Mg(2+) serves as cofactor.

Its subcellular location is the cytoplasm. The enzyme catalyses a 2'-deoxyribonucleoside 5'-diphosphate + ATP = a 2'-deoxyribonucleoside 5'-triphosphate + ADP. It carries out the reaction a ribonucleoside 5'-diphosphate + ATP = a ribonucleoside 5'-triphosphate + ADP. Its function is as follows. Major role in the synthesis of nucleoside triphosphates other than ATP. The ATP gamma phosphate is transferred to the NDP beta phosphate via a ping-pong mechanism, using a phosphorylated active-site intermediate. The protein is Nucleoside diphosphate kinase of Staphylococcus haemolyticus (strain JCSC1435).